The following is an 81-amino-acid chain: UPF0410 protein YwzA (81 aa).

Helical transmembrane passes span 1–21 (MSFL…SLFV), 27–47 (GGII…HGLL), and 56–76 (GFAI…VSLL).

The protein belongs to the UPF0410 family.

It is found in the cell membrane. In Bacillus subtilis (strain 168), this protein is UPF0410 protein YwzA (ywzA).